The sequence spans 1059 residues: Zinc finger protein 658 (1059 aa).

The region spanning 8-79 (VSFQDVTVEF…EDEFLNQRYP (72 aa)) is the KRAB domain. A Glycyl lysine isopeptide (Lys-Gly) (interchain with G-Cter in SUMO2) cross-link involves residue K178. The C2H2-type 1; degenerate zinc finger occupies 325–347 (FESNKCEENFSQSSAHIVHQKTQ). The segment at 352–375 (FGEHNECTDALYQKLDFTAHQRIH) adopts a C2H2-type 2; degenerate zinc-finger fold. The C2H2-type 3; degenerate zinc-finger motif lies at 381–406 (YLSDEHGKCRKSFYRKAHLIQHQRPH). Residues 412-434 (YQYEECAKSFCSSSHPIQHPGTY) form a C2H2-type 4; degenerate zinc finger. C2H2-type zinc fingers lie at residues 440–462 (YECN…LRIH), 518–540 (YECI…QRIH), 546–568 (YECV…QRVH), 574–596 (YECN…QRIH), 602–624 (YECS…HRIH), 630–652 (YECN…QRIH), 658–680 (YECN…QRIH), 686–708 (YECS…QRIH), 714–736 (YECN…QNIH), 742–764 (YECS…RRIH), 770–792 (YECS…ERIH), 798–820 (YECN…QRIH), 826–848 (YECN…QRIH), and 854–876 (YECN…HRIH). The C2H2-type 19; degenerate zinc finger occupies 882 to 904 (YECNDCGKTFSKTSHLRAHLRTR). 5 consecutive C2H2-type zinc fingers follow at residues 910–932 (YECS…QRVH), 938–960 (YECN…QRIH), 966–988 (YECN…QRIH), 994–1016 (YECN…QRIH), and 1022–1045 (YECD…TRMH).

It belongs to the krueppel C2H2-type zinc-finger protein family.

It localises to the nucleus. Functionally, mediates transcriptional repression in response to zinc. Represses several genes, including SLC30A5, SLC30A10 and CBWD1, by binding to the zinc transcriptional regulatory element (ZTRE) (5'-C[AC]C[TAG]CC[TC]-N(0-50)-[GA]G[ATC]G[TG]G-3') found in the promoter region. May play a role in the control of ribosome biogenesis, regulating predominantly rRNA levels, as well as those of several ribosomal proteins, thus coordinating this highly zinc-demanding process with the available zinc supply. This is Zinc finger protein 658 (ZNF658) from Homo sapiens (Human).